The chain runs to 788 residues: Probable potassium transporter 9 (788 aa).

The Cytoplasmic portion of the chain corresponds to 1–21 (MDPEFGRGMAPRKREPWRTTL). The chain crosses the membrane as a helical span at residues 22-42 (LLAYQSLGVVYGDLSISPLYV). Residues 43–59 (YKSTFAEDITHSESNEE) lie on the Extracellular side of the membrane. Residues 60–80 (IFGVLSFVFWTLTLIPLIKYV) form a helical membrane-spanning segment. Residues 81-151 (SIVLRADDNG…EKHKTLQTAL (71 aa)) lie on the Cytoplasmic side of the membrane. The helical transmembrane segment at 152 to 172 (LIMVMIGTCMVIGDGVLTPAI) threads the bilayer. Topologically, residues 173–191 (SVFSAVSGLELSLSRDQHE) are extracellular. Residues 192–212 (YAVIPITCVILVFLFALQHYG) traverse the membrane as a helical segment. Residues 213–215 (THR) lie on the Cytoplasmic side of the membrane. The chain crosses the membrane as a helical span at residues 216–236 (VGFLFAPIVLAWLICMSMLGL). At 237–264 (YNIIHWNPQVYRALNPYYMLKFLRKTKK) the chain is on the extracellular side. Residues 265–285 (SGWMSLGGILLCMTGSEAMFA) traverse the membrane as a helical segment. Over 286–292 (DLGHFSY) the chain is Cytoplasmic. Residues 293–313 (SAIQLAFTTLVYPALILGYMG) form a helical membrane-spanning segment. Topologically, residues 314 to 343 (QAAYLSKHHTLNSTYQIGYYISVPESVRWP) are extracellular. A glycan (N-linked (GlcNAc...) asparagine) is linked at asparagine 325. The helical transmembrane segment at 344-364 (VLVLAILASVVGSQAIISGTF) threads the bilayer. Over 365 to 391 (SIINQSQSLSCFPRVKVVHTSENIHGQ) the chain is Cytoplasmic. The helical transmembrane segment at 392–412 (IYIPEINWLLMVLCIAVTVGF) threads the bilayer. The Extracellular portion of the chain corresponds to 413–422 (RDTKHMGNAS). An N-linked (GlcNAc...) asparagine glycan is attached at asparagine 420. The helical transmembrane segment at 423 to 443 (GLAVITVMLVTTCLTSLVIML) threads the bilayer. At 444 to 451 (CWHRSPAL) the chain is on the cytoplasmic side. A helical transmembrane segment spans residues 452 to 472 (ALVFFLFFGSIEVLYFSASLI). The Extracellular portion of the chain corresponds to 473-476 (KFRE). A helical membrane pass occupies residues 477 to 497 (GAWLPIMLALILMAVMFIWHH). The Cytoplasmic segment spans residues 498 to 788 (TTIKKYEFDL…LLEVGMVYVL (291 aa)).

The protein belongs to the HAK/KUP transporter (TC 2.A.72.3) family.

It localises to the membrane. High-affinity potassium transporter. In Oryza sativa subsp. japonica (Rice), this protein is Probable potassium transporter 9 (HAK9).